The chain runs to 447 residues: uncharacterized protein (447 aa).

Positions 87, 93, 96, and 162 each coordinate [4Fe-4S] cluster. Residues Gln-284, Tyr-313, Glu-334, and Asp-375 each coordinate S-adenosyl-L-methionine. Catalysis depends on Cys-402, which acts as the Nucleophile.

The protein belongs to the class I-like SAM-binding methyltransferase superfamily. RNA M5U methyltransferase family.

This is an uncharacterized protein from Nanoarchaeum equitans (strain Kin4-M).